The chain runs to 285 residues: GPN-loop GTPase 3 (285 aa).

13–18 (GSGKST) serves as a coordination point for GTP. The short motif at 70 to 72 (GPN) is the Gly-Pro-Asn (GPN)-loop; involved in dimer interface element. 172–175 (TKID) lines the GTP pocket. Residues 253–276 (GEDLEPKEPPLENDDDDDDDEGDE) form a disordered region. The span at 263–275 (LENDDDDDDDEGD) shows a compositional bias: acidic residues.

It belongs to the GPN-loop GTPase family. Heterodimer with gpn1. Binds to RNA polymerase II (RNAPII).

Its function is as follows. Small GTPase required for proper localization of RNA polymerase II (RNAPII). May act at an RNAP assembly step prior to nuclear import. The sequence is that of GPN-loop GTPase 3 (gpn3) from Dictyostelium discoideum (Social amoeba).